Here is a 242-residue protein sequence, read N- to C-terminus: 7-cyano-7-deazaguanine synthase (242 aa).

An ATP-binding site is contributed by 12–22 (FSGGQDSTTCL). Residues C200, C215, C218, and C221 each coordinate Zn(2+).

The protein belongs to the QueC family. It depends on Zn(2+) as a cofactor.

The enzyme catalyses 7-carboxy-7-deazaguanine + NH4(+) + ATP = 7-cyano-7-deazaguanine + ADP + phosphate + H2O + H(+). Its pathway is purine metabolism; 7-cyano-7-deazaguanine biosynthesis. Functionally, catalyzes the ATP-dependent conversion of 7-carboxy-7-deazaguanine (CDG) to 7-cyano-7-deazaguanine (preQ(0)). This chain is 7-cyano-7-deazaguanine synthase, found in Nitratidesulfovibrio vulgaris (strain ATCC 29579 / DSM 644 / CCUG 34227 / NCIMB 8303 / VKM B-1760 / Hildenborough) (Desulfovibrio vulgaris).